We begin with the raw amino-acid sequence, 323 residues long: Acetyl-coenzyme A carboxylase carboxyl transferase subunit alpha (323 aa).

The CoA carboxyltransferase C-terminal domain maps to 40–293 (LAEKSLQLTK…RKALAESLKT (254 aa)).

It belongs to the AccA family. In terms of assembly, acetyl-CoA carboxylase is a heterohexamer composed of biotin carboxyl carrier protein (AccB), biotin carboxylase (AccC) and two subunits each of ACCase subunit alpha (AccA) and ACCase subunit beta (AccD).

The protein localises to the cytoplasm. The enzyme catalyses N(6)-carboxybiotinyl-L-lysyl-[protein] + acetyl-CoA = N(6)-biotinyl-L-lysyl-[protein] + malonyl-CoA. It functions in the pathway lipid metabolism; malonyl-CoA biosynthesis; malonyl-CoA from acetyl-CoA: step 1/1. In terms of biological role, component of the acetyl coenzyme A carboxylase (ACC) complex. First, biotin carboxylase catalyzes the carboxylation of biotin on its carrier protein (BCCP) and then the CO(2) group is transferred by the carboxyltransferase to acetyl-CoA to form malonyl-CoA. This Polynucleobacter necessarius subsp. necessarius (strain STIR1) protein is Acetyl-coenzyme A carboxylase carboxyl transferase subunit alpha.